Reading from the N-terminus, the 876-residue chain is Leucine--tRNA ligase (876 aa).

Positions 43–53 (PYPSGRIHMGH) match the 'HIGH' region motif. The short motif at 632–636 (KMSKS) is the 'KMSKS' region element. K635 is an ATP binding site.

It belongs to the class-I aminoacyl-tRNA synthetase family.

The protein localises to the cytoplasm. The enzyme catalyses tRNA(Leu) + L-leucine + ATP = L-leucyl-tRNA(Leu) + AMP + diphosphate. This chain is Leucine--tRNA ligase, found in Sinorhizobium medicae (strain WSM419) (Ensifer medicae).